Reading from the N-terminus, the 242-residue chain is uncharacterized protein (242 aa).

In terms of domain architecture, Response regulatory spans 3–116; it reads TALVIDDEPF…RLRKTVKRLS (114 aa). 4-aspartylphosphate is present on aspartate 54. An HTH LytTR-type domain is found at 139–240; that stretch reads IPCIGHNRIV…LKLLKEMLGL (102 aa).

This is an uncharacterized protein from Vibrio vulnificus (strain CMCP6).